The sequence spans 240 residues: Biosynthetic peptidoglycan transglycosylase (240 aa).

Residues Phe-9–Pro-31 traverse the membrane as a helical segment.

It belongs to the glycosyltransferase 51 family.

The protein localises to the cell inner membrane. It catalyses the reaction [GlcNAc-(1-&gt;4)-Mur2Ac(oyl-L-Ala-gamma-D-Glu-L-Lys-D-Ala-D-Ala)](n)-di-trans,octa-cis-undecaprenyl diphosphate + beta-D-GlcNAc-(1-&gt;4)-Mur2Ac(oyl-L-Ala-gamma-D-Glu-L-Lys-D-Ala-D-Ala)-di-trans,octa-cis-undecaprenyl diphosphate = [GlcNAc-(1-&gt;4)-Mur2Ac(oyl-L-Ala-gamma-D-Glu-L-Lys-D-Ala-D-Ala)](n+1)-di-trans,octa-cis-undecaprenyl diphosphate + di-trans,octa-cis-undecaprenyl diphosphate + H(+). It functions in the pathway cell wall biogenesis; peptidoglycan biosynthesis. Functionally, peptidoglycan polymerase that catalyzes glycan chain elongation from lipid-linked precursors. The chain is Biosynthetic peptidoglycan transglycosylase from Pseudomonas fluorescens (strain SBW25).